Here is a 99-residue protein sequence, read N- to C-terminus: ASCAARACALSGSNITVTYCSCTDGTTHVCPDGDSHETNDMYFCENISGVAACPDTNTVAVEVIYRDDSTNPIEGFQLHCRCSTYESSGLHYVCEELIG.

In terms of processing, contains 5 disulfide bonds. As to expression, expressed by the venom duct.

The protein localises to the secreted. Acts as a neurotoxin by inhibiting an ion channel. The polypeptide is Turripeptide OL71 (Iotyrris olangoensis (Sea snail)).